Consider the following 279-residue polypeptide: Digeranylgeranylglyceryl phosphate synthase (279 aa).

The next 8 membrane-spanning stretches (helical) occupy residues 14–34 (VKNCLTASFGTIIGGLIASNF), 36–56 (FGLIGYILLASLIVFLVCGFG), 94–114 (LMISGIIISLFNMICFAIALI), 131–153 (IIGNLIVAYLTGSIFIFGGASVG), 157–175 (ITLILFLCALFATWSREII), 201–221 (IFVAIGFLLCSILLSPLPYIL), 224–244 (FGAPYLMAIMICNVLFILAVL), and 259–279 (SKYIKIIMNLVLLSFVIGSLM).

This sequence belongs to the UbiA prenyltransferase family. DGGGP synthase subfamily. It depends on Mg(2+) as a cofactor.

The protein resides in the cell membrane. It carries out the reaction sn-3-O-(geranylgeranyl)glycerol 1-phosphate + (2E,6E,10E)-geranylgeranyl diphosphate = 2,3-bis-O-(geranylgeranyl)-sn-glycerol 1-phosphate + diphosphate. It functions in the pathway membrane lipid metabolism; glycerophospholipid metabolism. Functionally, prenyltransferase that catalyzes the transfer of the geranylgeranyl moiety of geranylgeranyl diphosphate (GGPP) to the C2 hydroxyl of (S)-3-O-geranylgeranylglyceryl phosphate (GGGP). This reaction is the second ether-bond-formation step in the biosynthesis of archaeal membrane lipids. In Methanococcus aeolicus (strain ATCC BAA-1280 / DSM 17508 / OCM 812 / Nankai-3), this protein is Digeranylgeranylglyceryl phosphate synthase.